The sequence spans 227 residues: Cytochrome c oxidase subunit 2 (227 aa).

The Mitochondrial intermembrane portion of the chain corresponds to 1-14 (MAYPFQLGLQDATS). A helical membrane pass occupies residues 15–45 (PIMEELLHFHDHTLMIVFLISSLVLYIITLM). Residues 46 to 59 (LTTKLTHTSTMDAQ) are Mitochondrial matrix-facing. Residues 60–87 (EVETVWTILPAIILILIALPSLRILYMM) form a helical membrane-spanning segment. The Mitochondrial intermembrane segment spans residues 88–227 (DEINNPSLTV…YFETWSAVMV (140 aa)). Cu cation contacts are provided by H161, C196, E198, C200, H204, and M207. E198 provides a ligand contact to Mg(2+). Y218 carries the post-translational modification Phosphotyrosine.

It belongs to the cytochrome c oxidase subunit 2 family. Component of the cytochrome c oxidase (complex IV, CIV), a multisubunit enzyme composed of 14 subunits. The complex is composed of a catalytic core of 3 subunits MT-CO1, MT-CO2 and MT-CO3, encoded in the mitochondrial DNA, and 11 supernumerary subunits COX4I, COX5A, COX5B, COX6A, COX6B, COX6C, COX7A, COX7B, COX7C, COX8 and NDUFA4, which are encoded in the nuclear genome. The complex exists as a monomer or a dimer and forms supercomplexes (SCs) in the inner mitochondrial membrane with NADH-ubiquinone oxidoreductase (complex I, CI) and ubiquinol-cytochrome c oxidoreductase (cytochrome b-c1 complex, complex III, CIII), resulting in different assemblies (supercomplex SCI(1)III(2)IV(1) and megacomplex MCI(2)III(2)IV(2)). Found in a complex with TMEM177, COA6, COX18, COX20, SCO1 and SCO2. Interacts with TMEM177 in a COX20-dependent manner. Interacts with COX20. Interacts with COX16. The cofactor is Cu cation.

It localises to the mitochondrion inner membrane. The enzyme catalyses 4 Fe(II)-[cytochrome c] + O2 + 8 H(+)(in) = 4 Fe(III)-[cytochrome c] + 2 H2O + 4 H(+)(out). In terms of biological role, component of the cytochrome c oxidase, the last enzyme in the mitochondrial electron transport chain which drives oxidative phosphorylation. The respiratory chain contains 3 multisubunit complexes succinate dehydrogenase (complex II, CII), ubiquinol-cytochrome c oxidoreductase (cytochrome b-c1 complex, complex III, CIII) and cytochrome c oxidase (complex IV, CIV), that cooperate to transfer electrons derived from NADH and succinate to molecular oxygen, creating an electrochemical gradient over the inner membrane that drives transmembrane transport and the ATP synthase. Cytochrome c oxidase is the component of the respiratory chain that catalyzes the reduction of oxygen to water. Electrons originating from reduced cytochrome c in the intermembrane space (IMS) are transferred via the dinuclear copper A center (CU(A)) of subunit 2 and heme A of subunit 1 to the active site in subunit 1, a binuclear center (BNC) formed by heme A3 and copper B (CU(B)). The BNC reduces molecular oxygen to 2 water molecules using 4 electrons from cytochrome c in the IMS and 4 protons from the mitochondrial matrix. This is Cytochrome c oxidase subunit 2 (MT-CO2) from Vulpes vulpes (Red fox).